The sequence spans 358 residues: MLLLKEEDEGRRRTSVPTQLMKLNRSQWWILVFISIFFLISAQAISVLLGRFYYNEGGNSKWISTLVQTGGFPILYLPLSLLPASQSSSSSSSSSSFKTLVWIYLSLGFAIGLDNFLYSVGLLYLSASTYSILCASQLAFNGVFYYYINSQKITCLIFFSVLFLSISAVLVSLDDDSNSPSGDSKWSYLIGCFCAVFASLIYSLQLSLMQFSFEKVLKSETLSMVLEMQIYTSLVASCVAVIGLFASGEWMLLSVEMEEFQEGQVIYVLTLVGAAVSCQLGCVGAVSLIFLVSSLFSNLISTLSLIVTPLAAIAVFHDKLTEVKMVAMPIAFTGFTFYIYQNYLDDLKVQRAREAQAE.

A run of 10 helical transmembrane segments spans residues 29–49 (WILV…SVLL), 62–82 (WIST…LSLL), 100–120 (LVWI…LYSV), 128–148 (STYS…YYYI), 153–173 (ITCL…LVSL), 189–209 (LIGC…LSLM), 235–255 (VASC…LLSV), 280–299 (LGCV…FSNL), 300–316 (ISTL…IAVF), and 320–340 (LTEV…FYIY).

It belongs to the purine permeases (TC 2.A.7.14) family.

Its subcellular location is the membrane. In Arabidopsis thaliana (Mouse-ear cress), this protein is Putative purine permease 12 (PUP12).